We begin with the raw amino-acid sequence, 325 residues long: Cytosolic Fe-S cluster assembly factor Nubp1 homolog (325 aa).

The interval 1-26 (MSSGADVPSDAPAHCPGTQSDDAGKA) is disordered. The [4Fe-4S] cluster site is built by Cys-15, Cys-29, Cys-32, and Cys-38. Position 68 to 75 (68 to 75 (GKGGVGKS)) interacts with ATP. 2 residues coordinate [4Fe-4S] cluster: Cys-243 and Cys-246.

This sequence belongs to the Mrp/NBP35 ATP-binding proteins family. NUBP1/NBP35 subfamily. In terms of assembly, heterotetramer of 2 Nubp1 and 2 Nubp2 chains. It depends on [4Fe-4S] cluster as a cofactor.

It localises to the cytoplasm. In terms of biological role, component of the cytosolic iron-sulfur (Fe/S) protein assembly (CIA) machinery. Required for maturation of extramitochondrial Fe-S proteins. The Nubp1-Nubp2 heterotetramer forms a Fe-S scaffold complex, mediating the de novo assembly of an Fe-S cluster and its transfer to target apoproteins. The chain is Cytosolic Fe-S cluster assembly factor Nubp1 homolog from Anopheles gambiae (African malaria mosquito).